The following is an 83-amino-acid chain: Bowman-Birk type proteinase inhibitor (83 aa).

7 disulfides stabilise this stretch: Cys-18–Cys-72, Cys-19–Cys-34, Cys-22–Cys-68, Cys-24–Cys-32, Cys-42–Cys-49, Cys-46–Cys-61, and Cys-51–Cys-59.

This sequence belongs to the Bowman-Birk serine protease inhibitor family.

This chain is Bowman-Birk type proteinase inhibitor, found in Phaseolus lunatus (Lima bean).